Consider the following 304-residue polypeptide: Probable 5-dehydro-4-deoxyglucarate dehydratase (304 aa).

The protein belongs to the DapA family.

It carries out the reaction 5-dehydro-4-deoxy-D-glucarate + H(+) = 2,5-dioxopentanoate + CO2 + H2O. Its pathway is carbohydrate acid metabolism; D-glucarate degradation; 2,5-dioxopentanoate from D-glucarate: step 2/2. The chain is Probable 5-dehydro-4-deoxyglucarate dehydratase from Rhodococcus opacus (strain B4).